A 906-amino-acid chain; its full sequence is Inactive angiotensin-converting enzyme-related protein (906 aa).

The signal sequence occupies residues 1–19 (MKFHILLLLLVGACLPVFT). The tract at residues 28 to 95 (LLPADEAPKD…SPTPEPEPAI (68 aa)) is disordered. Positions 67–83 (PEPKPEPEPEPEPKPEP) are enriched in basic and acidic residues. N-linked (GlcNAc...) asparagine glycosylation occurs at Asn159. Residues 175–765 (IKDEEKLRSW…EIDQVVVGWD (591 aa)) form the Peptidase M2 domain. Cys289 and Cys297 are oxidised to a cystine. N-linked (GlcNAc...) asparagine glycosylation is present at Asn653. The segment at 862–882 (VTTPEPSAEPEPTAKTTTKMP) is disordered. Positions 863 to 882 (TTPEPSAEPEPTAKTTTKMP) are enriched in low complexity.

Belongs to the peptidase M2 family. Expressed in the hypodermis, in the vulva during organogenesis, and in the ray papillae of the male tail.

Functionally, inactive as a metallopeptidase, due to a lack of active site residues. Required for larval molting, male tail development, and formation of adult alae. Acts in the heterochronic pathway and plays a role in the developmental timing of postembryonic hypodermal seam cell division and adult alae production. Acts synergistically with apl-1 in let-7 regulated postembryonic cell division events. Might act downstream of the heterochronic protein lin-41. Negative regulator of lifespan, heat and oxidative stress response and age-related degenerative changes like reduced pharyngeal pumping and decreased body movements. Lifespan restriction is dependent on the forkhead-type transcription factor daf-16. The protein is Inactive angiotensin-converting enzyme-related protein of Caenorhabditis elegans.